We begin with the raw amino-acid sequence, 359 residues long: Chorismate synthase (359 aa).

NADP(+)-binding residues include arginine 48 and arginine 54. FMN is bound by residues 129 to 131 (RSS), 241 to 242 (NA), glycine 285, 300 to 304 (KPTSS), and arginine 326.

Belongs to the chorismate synthase family. As to quaternary structure, homotetramer. FMNH2 serves as cofactor.

It carries out the reaction 5-O-(1-carboxyvinyl)-3-phosphoshikimate = chorismate + phosphate. It functions in the pathway metabolic intermediate biosynthesis; chorismate biosynthesis; chorismate from D-erythrose 4-phosphate and phosphoenolpyruvate: step 7/7. Catalyzes the anti-1,4-elimination of the C-3 phosphate and the C-6 proR hydrogen from 5-enolpyruvylshikimate-3-phosphate (EPSP) to yield chorismate, which is the branch point compound that serves as the starting substrate for the three terminal pathways of aromatic amino acid biosynthesis. This reaction introduces a second double bond into the aromatic ring system. This Afipia carboxidovorans (strain ATCC 49405 / DSM 1227 / KCTC 32145 / OM5) (Oligotropha carboxidovorans) protein is Chorismate synthase.